The sequence spans 344 residues: tRNA N6-adenosine threonylcarbamoyltransferase (344 aa).

Fe cation is bound by residues H116 and H120. Substrate contacts are provided by residues 138–142, D171, G184, D188, and N277; that span reads LVSGG. D307 contacts Fe cation.

Belongs to the KAE1 / TsaD family. Fe(2+) is required as a cofactor.

The protein localises to the cytoplasm. It catalyses the reaction L-threonylcarbamoyladenylate + adenosine(37) in tRNA = N(6)-L-threonylcarbamoyladenosine(37) in tRNA + AMP + H(+). Functionally, required for the formation of a threonylcarbamoyl group on adenosine at position 37 (t(6)A37) in tRNAs that read codons beginning with adenine. Is involved in the transfer of the threonylcarbamoyl moiety of threonylcarbamoyl-AMP (TC-AMP) to the N6 group of A37, together with TsaE and TsaB. TsaD likely plays a direct catalytic role in this reaction. In Latilactobacillus sakei subsp. sakei (strain 23K) (Lactobacillus sakei subsp. sakei), this protein is tRNA N6-adenosine threonylcarbamoyltransferase.